The primary structure comprises 616 residues: Sialic acid TRAP transporter permease protein SiaT (616 aa).

The interval 1–190 (MKYINKLEEW…RISNYIKLGS (190 aa)) is TRAP transporter small permease. 17 consecutive transmembrane segments (helical) span residues 9-29 (EWLGGTLFIAIFGILIAQILS), 36-56 (PLIWSEELAKLLFVYVGMLGI), 83-103 (TNTFVQLLVFVCIFLFIHFGI), 117-137 (GGISEKWIFAALPVIAILMMF), 153-173 (YLPATFFIISAVILFAILFFA), 195-215 (IALLVWLIIMFIGVPVGWSLF), 244-264 (FPLLAVPFYILTGILMNTGGI), 288-308 (IGASLLFSGMSGSALADAGGL), 332-352 (ASCIIGPLVPPSIAMIIYGVI), 357-377 (IAKLFIAGFIPGVLITLALMA), 407-427 (FWAILTPLLIIGGIFSGLFSP), 431-451 (AIVAAAYSIIIGKFVYKELTL), 459-479 (IEAMAITGVVALMIMTVTFFG), 505-525 (VLVMINALLLFLGMFIDALAL), 527-547 (FLVLPMLIPIAMQFNIDLIFF), 552-572 (TLNMMIGILTPPMGMALFVVA), and 587-607 (LPFLIPVFVTLVLITIFPQII). Positions 191-616 (SSVYIALLVW…ITFVPNLLIP (426 aa)) are TRAP transporter large permease.

This sequence in the N-terminal section; belongs to the TRAP transporter small permease family. In the C-terminal section; belongs to the TRAP transporter large permease family. In terms of assembly, the complex comprises the extracytoplasmic solute receptor protein SiaP, and the fused transmembrane protein SiaT.

It is found in the cell inner membrane. Functionally, part of the tripartite ATP-independent periplasmic (TRAP) transport system SiaPT involved in the uptake of sialic acid. The polypeptide is Sialic acid TRAP transporter permease protein SiaT (siaT) (Haemophilus influenzae (strain 86-028NP)).